The following is a 75-amino-acid chain: Conotoxin Vc6a (75 aa).

The signal sequence occupies residues 1–22 (MKLTCVVIVAVLFLTANTFATA). Positions 23–49 (DDPRNGLENLFLKAHHEMNPEASKLNE) are excised as a propeptide. 3 disulfide bridges follow: Cys-51-Cys-66, Cys-58-Cys-69, and Cys-65-Cys-74.

Expressed by the venom duct.

The protein resides in the secreted. The protein is Conotoxin Vc6a of Conus victoriae (Queen Victoria cone).